Reading from the N-terminus, the 305-residue chain is tRNA uridine(34) hydroxylase (305 aa).

The 95-residue stretch at 125 to 219 (ADENTVVVDT…YLEEVPREDS (95 aa)) folds into the Rhodanese domain. The Cysteine persulfide intermediate role is filled by C179.

The protein belongs to the TrhO family.

The catalysed reaction is uridine(34) in tRNA + AH2 + O2 = 5-hydroxyuridine(34) in tRNA + A + H2O. In terms of biological role, catalyzes oxygen-dependent 5-hydroxyuridine (ho5U) modification at position 34 in tRNAs. The protein is tRNA uridine(34) hydroxylase of Brucella anthropi (strain ATCC 49188 / DSM 6882 / CCUG 24695 / JCM 21032 / LMG 3331 / NBRC 15819 / NCTC 12168 / Alc 37) (Ochrobactrum anthropi).